The primary structure comprises 218 residues: Adenylate kinase (218 aa).

11–16 (GAGKGT) is a binding site for ATP. The interval 31-60 (STGDMFREAMANKTKVGLEAKSYIDKGNLV) is NMP. Residues T32, R37, 58–60 (NLV), 86–89 (GFPR), and Q93 contribute to the AMP site. The interval 127-165 (ARYMCKNCGATYNKISKQPKVEGTCDRCGSHEFYQREDD) is LID. R128 is an ATP binding site. Zn(2+)-binding residues include C131 and C134. Residue 137–138 (TY) coordinates ATP. Residues C151 and C154 each contribute to the Zn(2+) site. 2 residues coordinate AMP: R162 and R173. Q201 contacts ATP.

This sequence belongs to the adenylate kinase family. Monomer.

It localises to the cytoplasm. It carries out the reaction AMP + ATP = 2 ADP. Its pathway is purine metabolism; AMP biosynthesis via salvage pathway; AMP from ADP: step 1/1. In terms of biological role, catalyzes the reversible transfer of the terminal phosphate group between ATP and AMP. Plays an important role in cellular energy homeostasis and in adenine nucleotide metabolism. This chain is Adenylate kinase, found in Lactobacillus acidophilus (strain ATCC 700396 / NCK56 / N2 / NCFM).